A 349-amino-acid chain; its full sequence is Hydroxymethylglutaryl-CoA synthase (349 aa).

(3S)-3-hydroxy-3-methylglutaryl-CoA contacts are provided by Asp29 and Ala30. Glu81 acts as the Proton donor/acceptor in catalysis. Residues Cys113 and Thr154 each coordinate (3S)-3-hydroxy-3-methylglutaryl-CoA. Cys113 acts as the Acyl-thioester intermediate in catalysis. Position 202 (Arg202) interacts with CoA. 2 residues coordinate (3S)-3-hydroxy-3-methylglutaryl-CoA: Thr204 and His237. His237 serves as the catalytic Proton donor/acceptor. Lys242 is a CoA binding site. 3 residues coordinate (3S)-3-hydroxy-3-methylglutaryl-CoA: Lys246, Asn269, and Ser299.

It belongs to the thiolase-like superfamily. Archaeal HMG-CoA synthase family. As to quaternary structure, interacts with acetoacetyl-CoA thiolase that catalyzes the precedent step in the pathway and with a DUF35 protein. The acetoacetyl-CoA thiolase/HMG-CoA synthase complex channels the intermediate via a fused CoA-binding site, which allows for efficient coupling of the endergonic thiolase reaction with the exergonic HMGCS reaction.

It catalyses the reaction acetoacetyl-CoA + acetyl-CoA + H2O = (3S)-3-hydroxy-3-methylglutaryl-CoA + CoA + H(+). The protein operates within metabolic intermediate biosynthesis; (R)-mevalonate biosynthesis; (R)-mevalonate from acetyl-CoA: step 2/3. Its function is as follows. Catalyzes the condensation of acetyl-CoA with acetoacetyl-CoA to form 3-hydroxy-3-methylglutaryl-CoA (HMG-CoA). Functions in the mevalonate (MVA) pathway leading to isopentenyl diphosphate (IPP), a key precursor for the biosynthesis of isoprenoid compounds that are building blocks of archaeal membrane lipids. The protein is Hydroxymethylglutaryl-CoA synthase of Methanosarcina barkeri (strain Fusaro / DSM 804).